Here is a 935-residue protein sequence, read N- to C-terminus: Phosphoenolpyruvate carboxylase (935 aa).

Residues H161 and K593 contribute to the active site.

Belongs to the PEPCase type 1 family. Mg(2+) serves as cofactor.

The enzyme catalyses oxaloacetate + phosphate = phosphoenolpyruvate + hydrogencarbonate. In terms of biological role, forms oxaloacetate, a four-carbon dicarboxylic acid source for the tricarboxylic acid cycle. The polypeptide is Phosphoenolpyruvate carboxylase (Mycolicibacterium paratuberculosis (strain ATCC BAA-968 / K-10) (Mycobacterium paratuberculosis)).